Here is a 355-residue protein sequence, read N- to C-terminus: Putative arylamide transporter (355 aa).

6 helical membrane passes run 22–42 (TVLWPITQTSVVAGLAWYLTH), 44–64 (VFNHPQAFFAPISAVVCMSAT), 71–91 (RAQQMIVGVALGIVLGAGVHA), 92–112 (LLGSGPIAMGVVVFIALSVAV), 119–139 (VAQGLMFINQAAVSAVLVLVF), and 150–170 (LFDALVGGGLAIVFSILLFPP).

It localises to the cell membrane. May be involved in the import of arylamide compounds. This chain is Putative arylamide transporter, found in Mycobacterium bovis (strain ATCC BAA-935 / AF2122/97).